Consider the following 296-residue polypeptide: Adrenocorticotropic hormone receptor (296 aa).

Topologically, residues 1–23 (MKHIINSYEHTNDTARNNSDCPD) are extracellular. N-linked (GlcNAc...) asparagine glycosylation is found at asparagine 12 and asparagine 17. 2 cysteine pairs are disulfide-bonded: cysteine 21–cysteine 253 and cysteine 245–cysteine 251. A helical transmembrane segment spans residues 24–49 (VVLPEEIFFTISVIGILENLIVLLAV). Over 50 to 58 (IKNKNLQSP) the chain is Cytoplasmic. Residues 59–79 (MYFFICSLAISDMLGSLYKIL) traverse the membrane as a helical segment. At 80–104 (ENILIMFRNMGYLKPRGSFESTADD) the chain is on the extracellular side. A helical transmembrane segment spans residues 105–126 (IIDCMFILSLLGSIFSLSVIAA). The Cytoplasmic portion of the chain corresponds to 127-147 (DRYITIFHALQYHSIVTMRRT). Residues 148 to 168 (IITLTIIWMFCTGSGITMVIF) traverse the membrane as a helical segment. Residues 169 to 180 (SHHIPTVLTFTS) lie on the Extracellular side of the membrane. A helical membrane pass occupies residues 181-199 (LFPLMLVFILCLYIHMFLL). At 200–217 (ARSHARKISTLPRTNMKG) the chain is on the cytoplasmic side. Residues 218 to 244 (AMTLTILLGVFIFCWAPFVLHVLLMTF) form a helical membrane-spanning segment. The Extracellular segment spans residues 245–256 (CPNNPYCVCYMS). The helical transmembrane segment at 257–278 (LFQVNGMLIMCNAVIDPFIYAF) threads the bilayer. At 279–296 (RSPELRDAFKRMLFCNRY) the chain is on the cytoplasmic side. The S-palmitoyl cysteine moiety is linked to residue cysteine 293.

This sequence belongs to the G-protein coupled receptor 1 family. In terms of assembly, homodimer. Interacts with corticotropin (ACTH). Interacts with MRAP; this interaction targets MC2R to the plasma membrane. Interacts with MRAP2; competing with MRAP for binding to MC2R and impairing the binding of corticotropin (ACTH). In terms of processing, ubiquitinated by MGRN1 that may be involved in post-endocytic trafficking and/or degradation of internalized receptor.

Its subcellular location is the cell membrane. Functionally, hormone receptor primarily expressed in adrenal cortex that plays a key role in regulating adrenocortical function. Upon corticotropin (ACTH) binding, facilitates the release of adrenal glucocorticoids, including cortisol and corticosterone. In addition, MC2R is required for fetal and neonatal adrenal gland development. Mechanistically, activates adenylate cyclase (cAMP), the MAPK cascade as well as the cAMP-dependent protein kinase A pathway leading to steroidogenic factor 1/NR5A1-mediated transcriptional activation. The chain is Adrenocorticotropic hormone receptor (Mc2r) from Mus musculus (Mouse).